Reading from the N-terminus, the 248-residue chain is Ubiquinone/menaquinone biosynthesis C-methyltransferase UbiE (248 aa).

The S-adenosyl-L-methionine site is built by Ser-68 and Asp-92.

The protein belongs to the class I-like SAM-binding methyltransferase superfamily. MenG/UbiE family.

The catalysed reaction is a 2-demethylmenaquinol + S-adenosyl-L-methionine = a menaquinol + S-adenosyl-L-homocysteine + H(+). It catalyses the reaction a 2-methoxy-6-(all-trans-polyprenyl)benzene-1,4-diol + S-adenosyl-L-methionine = a 5-methoxy-2-methyl-3-(all-trans-polyprenyl)benzene-1,4-diol + S-adenosyl-L-homocysteine + H(+). It participates in quinol/quinone metabolism; menaquinone biosynthesis; menaquinol from 1,4-dihydroxy-2-naphthoate: step 2/2. It functions in the pathway cofactor biosynthesis; ubiquinone biosynthesis. Methyltransferase required for the conversion of demethylmenaquinol (DMKH2) to menaquinol (MKH2) and the conversion of 2-polyprenyl-6-methoxy-1,4-benzoquinol (DDMQH2) to 2-polyprenyl-3-methyl-6-methoxy-1,4-benzoquinol (DMQH2). This chain is Ubiquinone/menaquinone biosynthesis C-methyltransferase UbiE, found in Rickettsia rickettsii (strain Iowa).